Consider the following 555-residue polypeptide: CTP synthase (555 aa).

The amidoligase domain stretch occupies residues 1–265; sequence MTRYIFITGG…GNRVCEKLNI (265 aa). A CTP-binding site is contributed by serine 13. Serine 13 contributes to the UTP binding site. ATP is bound by residues 14 to 19 and aspartate 71; that span reads SLGKGI. 2 residues coordinate Mg(2+): aspartate 71 and glutamate 139. Residues 146–148, 186–191, and lysine 222 each bind CTP; these read DIE and KTKPTQ. UTP contacts are provided by residues 186–191 and lysine 222; that span reads KTKPTQ. The Glutamine amidotransferase type-1 domain maps to 290-541; it reads TVAVVGKYVD…IKAGLAAKEA (252 aa). Glycine 351 lines the L-glutamine pocket. Cysteine 378 functions as the Nucleophile; for glutamine hydrolysis in the catalytic mechanism. Residues 379-382, glutamate 402, and arginine 469 each bind L-glutamine; that span reads LGMQ. Residues histidine 514 and glutamate 516 contribute to the active site.

This sequence belongs to the CTP synthase family. As to quaternary structure, homotetramer.

It carries out the reaction UTP + L-glutamine + ATP + H2O = CTP + L-glutamate + ADP + phosphate + 2 H(+). It catalyses the reaction L-glutamine + H2O = L-glutamate + NH4(+). The enzyme catalyses UTP + NH4(+) + ATP = CTP + ADP + phosphate + 2 H(+). It participates in pyrimidine metabolism; CTP biosynthesis via de novo pathway; CTP from UDP: step 2/2. With respect to regulation, allosterically activated by GTP, when glutamine is the substrate; GTP has no effect on the reaction when ammonia is the substrate. The allosteric effector GTP functions by stabilizing the protein conformation that binds the tetrahedral intermediate(s) formed during glutamine hydrolysis. Inhibited by the product CTP, via allosteric rather than competitive inhibition. Catalyzes the ATP-dependent amination of UTP to CTP with either L-glutamine or ammonia as the source of nitrogen. Regulates intracellular CTP levels through interactions with the four ribonucleotide triphosphates. The sequence is that of CTP synthase from Coxiella burnetii (strain CbuG_Q212) (Coxiella burnetii (strain Q212)).